A 63-amino-acid polypeptide reads, in one-letter code: Conotoxin Pn-B01411 (63 aa).

Positions 1–22 (MRCFPVFIILLLLMASAPSFDA) are cleaved as a signal peptide. Positions 23–49 (RPKTEDDVPLSSFRDNLKRTLRTLLDP) are excised as a propeptide. Ile-62 carries the isoleucine amide modification.

Belongs to the conotoxin T superfamily. Contains 2 disulfide bonds that can be either 'C1-C3, C2-C4' or 'C1-C4, C2-C3', since these disulfide connectivities have been observed for conotoxins with cysteine framework V (for examples, see AC P0DQQ7 and AC P81755). In terms of tissue distribution, expressed by the venom duct.

It is found in the secreted. This chain is Conotoxin Pn-B01411, found in Conus pennaceus (Feathered cone).